An 80-amino-acid polypeptide reads, in one-letter code: Putative ATP-dependent Clp protease proteolytic subunit (80 aa).

His19 is an active-site residue.

Belongs to the peptidase S14 family. Component of the chloroplastic Clp protease core complex.

It is found in the plastid. It localises to the chloroplast. The catalysed reaction is Hydrolysis of proteins to small peptides in the presence of ATP and magnesium. alpha-casein is the usual test substrate. In the absence of ATP, only oligopeptides shorter than five residues are hydrolyzed (such as succinyl-Leu-Tyr-|-NHMec, and Leu-Tyr-Leu-|-Tyr-Trp, in which cleavage of the -Tyr-|-Leu- and -Tyr-|-Trp bonds also occurs).. Cleaves peptides in various proteins in a process that requires ATP hydrolysis. Has a chymotrypsin-like activity. Plays a major role in the degradation of misfolded proteins. The sequence is that of Putative ATP-dependent Clp protease proteolytic subunit from Pinus strobus (Eastern white pine).